We begin with the raw amino-acid sequence, 162 residues long: Photosystem II extrinsic protein V (162 aa).

Positions 1 to 26 (MFNKNFWTSIIIGCLFCTITYSGVNA) are cleaved as a signal peptide. Cysteine 62, cysteine 65, histidine 66, and histidine 117 together coordinate heme c.

Belongs to the cytochrome c family. PsbV subfamily. In terms of assembly, PSII is composed of 1 copy each of membrane proteins PsbA, PsbB, PsbC, PsbD, PsbE, PsbF, PsbH, PsbI, PsbJ, PsbK, PsbL, PsbM, PsbT, PsbX, PsbY, PsbZ, Psb30/Ycf12, at least 3 peripheral proteins of the oxygen-evolving complex and a large number of cofactors. It forms dimeric complexes. The cofactor is heme c.

It is found in the plastid. Its subcellular location is the cyanelle thylakoid membrane. In terms of biological role, one of the extrinsic, lumenal subunits of photosystem II (PSII). PSII is a light-driven water plastoquinone oxidoreductase, using light energy to abstract electrons from H(2)O, generating a proton gradient subsequently used for ATP formation. The extrinsic proteins stabilize the structure of photosystem II oxygen-evolving complex (OEC), the ion environment of oxygen evolution and protect the OEC against heat-induced inactivation. In Cyanophora paradoxa, this protein is Photosystem II extrinsic protein V.